Consider the following 356-residue polypeptide: Tyrosine recombinase XerS (356 aa).

One can recognise a Core-binding (CB) domain in the interval 16–121; the sequence is VMPWYVLDYY…ALSSLYKYLT (106 aa). In terms of domain architecture, Tyr recombinase spans 169 to 354; sequence AFLDYVDKEY…VNDEQKNALD (186 aa). Catalysis depends on residues arginine 210, lysine 234, histidine 306, arginine 309, and histidine 332. Tyrosine 341 acts as the O-(3'-phospho-DNA)-tyrosine intermediate in catalysis.

This sequence belongs to the 'phage' integrase family. XerS subfamily.

It localises to the cytoplasm. FtsK is required for recombination. Functionally, site-specific tyrosine recombinase, which acts by catalyzing the cutting and rejoining of the recombining DNA molecules. Essential to convert dimers of the bacterial chromosome into monomers to permit their segregation at cell division. The sequence is that of Tyrosine recombinase XerS from Streptococcus pyogenes serotype M28 (strain MGAS6180).